A 340-amino-acid chain; its full sequence is S-adenosylmethionine:tRNA ribosyltransferase-isomerase (340 aa).

This sequence belongs to the QueA family. In terms of assembly, monomer.

It is found in the cytoplasm. It catalyses the reaction 7-aminomethyl-7-carbaguanosine(34) in tRNA + S-adenosyl-L-methionine = epoxyqueuosine(34) in tRNA + adenine + L-methionine + 2 H(+). It functions in the pathway tRNA modification; tRNA-queuosine biosynthesis. Transfers and isomerizes the ribose moiety from AdoMet to the 7-aminomethyl group of 7-deazaguanine (preQ1-tRNA) to give epoxyqueuosine (oQ-tRNA). The sequence is that of S-adenosylmethionine:tRNA ribosyltransferase-isomerase from Francisella tularensis subsp. holarctica (strain OSU18).